Reading from the N-terminus, the 421-residue chain is Gamma-glutamyl phosphate reductase (421 aa).

The protein belongs to the gamma-glutamyl phosphate reductase family.

The protein localises to the cytoplasm. The enzyme catalyses L-glutamate 5-semialdehyde + phosphate + NADP(+) = L-glutamyl 5-phosphate + NADPH + H(+). Its pathway is amino-acid biosynthesis; L-proline biosynthesis; L-glutamate 5-semialdehyde from L-glutamate: step 2/2. Its function is as follows. Catalyzes the NADPH-dependent reduction of L-glutamate 5-phosphate into L-glutamate 5-semialdehyde and phosphate. The product spontaneously undergoes cyclization to form 1-pyrroline-5-carboxylate. This chain is Gamma-glutamyl phosphate reductase, found in Azotobacter vinelandii (strain DJ / ATCC BAA-1303).